A 135-amino-acid chain; its full sequence is Thioredoxin H5 (135 aa).

One can recognise a Thioredoxin domain in the interval 13-128 (EHLDYSGGNV…LQEKFEQLNR (116 aa)). Residues Cys-54 and Cys-57 each act as nucleophile in the active site. Cys-54 and Cys-57 are joined by a disulfide.

The protein belongs to the thioredoxin family. Plant H-type subfamily.

The protein resides in the cytoplasm. Probable thiol-disulfide oxidoreductase that may be involved in the redox regulation of a number of cytosolic enzymes. The protein is Thioredoxin H5 of Oryza sativa subsp. japonica (Rice).